We begin with the raw amino-acid sequence, 168 residues long: Ribosome maturation factor RimM (168 aa).

A PRC barrel domain is found at 93–168 (EDEFYQSDLV…IVLNIPEFID (76 aa)).

It belongs to the RimM family. As to quaternary structure, binds ribosomal protein uS19.

It is found in the cytoplasm. Functionally, an accessory protein needed during the final step in the assembly of 30S ribosomal subunit, possibly for assembly of the head region. Essential for efficient processing of 16S rRNA. May be needed both before and after RbfA during the maturation of 16S rRNA. It has affinity for free ribosomal 30S subunits but not for 70S ribosomes. This is Ribosome maturation factor RimM from Wolbachia pipientis wMel.